The chain runs to 81 residues: Photosystem I iron-sulfur center (81 aa).

4Fe-4S ferredoxin-type domains lie at 2-31 (SHSV…MIPW) and 39-68 (IASA…VRVY). C11, C14, C17, C21, C48, C51, C54, and C58 together coordinate [4Fe-4S] cluster.

As to quaternary structure, the eukaryotic PSI reaction center is composed of at least 11 subunits. The cofactor is [4Fe-4S] cluster.

It localises to the plastid thylakoid membrane. It catalyses the reaction reduced [plastocyanin] + hnu + oxidized [2Fe-2S]-[ferredoxin] = oxidized [plastocyanin] + reduced [2Fe-2S]-[ferredoxin]. Its function is as follows. Apoprotein for the two 4Fe-4S centers FA and FB of photosystem I (PSI); essential for photochemical activity. FB is the terminal electron acceptor of PSI, donating electrons to ferredoxin. The C-terminus interacts with PsaA/B/D and helps assemble the protein into the PSI complex. Required for binding of PsaD and PsaE to PSI. PSI is a plastocyanin-ferredoxin oxidoreductase, converting photonic excitation into a charge separation, which transfers an electron from the donor P700 chlorophyll pair to the spectroscopically characterized acceptors A0, A1, FX, FA and FB in turn. This is Photosystem I iron-sulfur center from Cuscuta obtusiflora (Peruvian dodder).